The primary structure comprises 306 residues: Large ribosomal subunit protein uL18 (306 aa).

This sequence belongs to the universal ribosomal protein uL18 family. In terms of assembly, component of the large ribosomal subunit (LSU).

It is found in the cytoplasm. The protein resides in the nucleus. Functionally, component of the ribosome, a large ribonucleoprotein complex responsible for the synthesis of proteins in the cell. The small ribosomal subunit (SSU) binds messenger RNAs (mRNAs) and translates the encoded message by selecting cognate aminoacyl-transfer RNA (tRNA) molecules. The large subunit (LSU) contains the ribosomal catalytic site termed the peptidyl transferase center (PTC), which catalyzes the formation of peptide bonds, thereby polymerizing the amino acids delivered by tRNAs into a polypeptide chain. The nascent polypeptides leave the ribosome through a tunnel in the LSU and interact with protein factors that function in enzymatic processing, targeting, and the membrane insertion of nascent chains at the exit of the ribosomal tunnel. This Theileria annulata protein is Large ribosomal subunit protein uL18 (RPL5).